The primary structure comprises 405 residues: S-adenosylmethionine synthase (405 aa).

141–146 (GQGSVD) lines the ATP pocket.

The protein belongs to the AdoMet synthase 2 family. Requires Mg(2+) as cofactor.

It carries out the reaction L-methionine + ATP + H2O = S-adenosyl-L-methionine + phosphate + diphosphate. It participates in amino-acid biosynthesis; S-adenosyl-L-methionine biosynthesis; S-adenosyl-L-methionine from L-methionine: step 1/1. Functionally, catalyzes the formation of S-adenosylmethionine from methionine and ATP. This chain is S-adenosylmethionine synthase, found in Methanococcus maripaludis (Methanococcus deltae).